Reading from the N-terminus, the 159-residue chain is Ribosomal RNA large subunit methyltransferase H (159 aa).

Residues Leu76, Gly108, and 127 to 132 (FGLLTL) each bind S-adenosyl-L-methionine.

It belongs to the RNA methyltransferase RlmH family. In terms of assembly, homodimer.

It localises to the cytoplasm. It carries out the reaction pseudouridine(1915) in 23S rRNA + S-adenosyl-L-methionine = N(3)-methylpseudouridine(1915) in 23S rRNA + S-adenosyl-L-homocysteine + H(+). Functionally, specifically methylates the pseudouridine at position 1915 (m3Psi1915) in 23S rRNA. This is Ribosomal RNA large subunit methyltransferase H from Leuconostoc mesenteroides subsp. mesenteroides (strain ATCC 8293 / DSM 20343 / BCRC 11652 / CCM 1803 / JCM 6124 / NCDO 523 / NBRC 100496 / NCIMB 8023 / NCTC 12954 / NRRL B-1118 / 37Y).